Reading from the N-terminus, the 1004-residue chain is Phyllocladan-16-alpha-ol synthase (1004 aa).

Positions 321–324 (DADD) match the DXDD motif motif. Mg(2+)-binding residues include Asp667, Glu671, Asn872, Asp873, Ser876, and Asp880. The short motif at 667 to 671 (DEFME) is the DEXXE motif element.

Belongs to the terpene synthase family. Mg(2+) serves as cofactor.

The catalysed reaction is (2E,6E,10E)-geranylgeranyl diphosphate = (+)-copalyl diphosphate. The enzyme catalyses (+)-copalyl diphosphate + H2O = phyllocladan-16alpha-ol + diphosphate. Its function is as follows. Involved in the synthesis of labdane-related hydrocarbons by catalyzing the conversion of geranylgeranyl diphosphate (GGDP) to phyllocladan-16-alpha-ol in a two step via type B cyclization into a (+)-copalyl diphosphate ((+)-CDP) intermediate. The sequence is that of Phyllocladan-16-alpha-ol synthase (PaDC1) from Phomopsis amygdali (Fusicoccum amygdali).